A 223-amino-acid chain; its full sequence is Translation initiation factor 6 (223 aa).

The protein belongs to the eIF-6 family.

Its function is as follows. Binds to the 50S ribosomal subunit and prevents its association with the 30S ribosomal subunit to form the 70S initiation complex. The protein is Translation initiation factor 6 of Thermofilum pendens (strain DSM 2475 / Hrk 5).